A 185-amino-acid chain; its full sequence is Threonylcarbamoyl-AMP synthase (185 aa).

Residues 1–185 (MKNLNQVVDA…AKTGNTLRQG (185 aa)) form the YrdC-like domain.

It belongs to the SUA5 family. TsaC subfamily.

Its subcellular location is the cytoplasm. The catalysed reaction is L-threonine + hydrogencarbonate + ATP = L-threonylcarbamoyladenylate + diphosphate + H2O. Required for the formation of a threonylcarbamoyl group on adenosine at position 37 (t(6)A37) in tRNAs that read codons beginning with adenine. Catalyzes the conversion of L-threonine, HCO(3)(-)/CO(2) and ATP to give threonylcarbamoyl-AMP (TC-AMP) as the acyladenylate intermediate, with the release of diphosphate. The sequence is that of Threonylcarbamoyl-AMP synthase from Aliivibrio fischeri (strain ATCC 700601 / ES114) (Vibrio fischeri).